The following is a 228-amino-acid chain: Large ribosomal subunit protein uL1 (228 aa).

The protein belongs to the universal ribosomal protein uL1 family. Part of the 50S ribosomal subunit.

Functionally, binds directly to 23S rRNA. The L1 stalk is quite mobile in the ribosome, and is involved in E site tRNA release. Protein L1 is also a translational repressor protein, it controls the translation of the L11 operon by binding to its mRNA. The chain is Large ribosomal subunit protein uL1 from Clavibacter sepedonicus (Clavibacter michiganensis subsp. sepedonicus).